We begin with the raw amino-acid sequence, 768 residues long: Probable dipeptidyl peptidase 4 (768 aa).

Positions 1 to 17 (MKLGKWSVLLLVGCTAA) are cleaved as a signal peptide. Residues asparagine 38, asparagine 81, asparagine 104, asparagine 113, asparagine 221, asparagine 282, and asparagine 468 are each glycosylated (N-linked (GlcNAc...) asparagine). Catalysis depends on serine 616, which acts as the Charge relay system. Asparagine 668 carries N-linked (GlcNAc...) asparagine glycosylation. Active-site charge relay system residues include aspartate 693 and histidine 728.

The protein belongs to the peptidase S9B family.

It is found in the secreted. It carries out the reaction Release of an N-terminal dipeptide, Xaa-Yaa-|-Zaa-, from a polypeptide, preferentially when Yaa is Pro, provided Zaa is neither Pro nor hydroxyproline.. In terms of biological role, extracellular dipeptidyl-peptidase which removes N-terminal dipeptides sequentially from polypeptides having unsubstituted N-termini provided that the penultimate residue is proline. The sequence is that of Probable dipeptidyl peptidase 4 (dpp4) from Aspergillus clavatus (strain ATCC 1007 / CBS 513.65 / DSM 816 / NCTC 3887 / NRRL 1 / QM 1276 / 107).